The following is a 167-amino-acid chain: Lipoprotein signal peptidase (167 aa).

4 helical membrane-spanning segments follow: residues 8 to 28 (TFLT…VVLL), 46 to 66 (WGHF…FGLF), 68 to 88 (QYKI…ALFL), and 101 to 121 (IALT…LLHG). Active-site residues include Asp-125 and Asp-143. The chain crosses the membrane as a helical span at residues 139–159 (FNLADAFISIGTLLLIGHLYF).

The protein belongs to the peptidase A8 family.

It is found in the cell inner membrane. It carries out the reaction Release of signal peptides from bacterial membrane prolipoproteins. Hydrolyzes -Xaa-Yaa-Zaa-|-(S,diacylglyceryl)Cys-, in which Xaa is hydrophobic (preferably Leu), and Yaa (Ala or Ser) and Zaa (Gly or Ala) have small, neutral side chains.. Its pathway is protein modification; lipoprotein biosynthesis (signal peptide cleavage). In terms of biological role, this protein specifically catalyzes the removal of signal peptides from prolipoproteins. The chain is Lipoprotein signal peptidase from Chlamydia trachomatis serovar L2 (strain ATCC VR-902B / DSM 19102 / 434/Bu).